The sequence spans 272 residues: CD40 ligand (272 aa).

The Cytoplasmic segment spans residues 1-23 (MNEAYSPAAPRPMGSTSPSTMKM). A helical; Signal-anchor for type II membrane protein membrane pass occupies residues 24–44 (FMCFLSVFMVVQTIGTVLFCL). Residues 45–272 (YLHMKMDKME…GNTYFGMFKL (228 aa)) lie on the Extracellular side of the membrane. N-linked (GlcNAc...) asparagine glycosylation is found at asparagine 124 and asparagine 146. The THD domain occupies 136 to 272 (IATHLAGVKS…GNTYFGMFKL (137 aa)). An intrachain disulfide couples cysteine 190 to cysteine 229. N-linked (GlcNAc...) asparagine glycosylation occurs at asparagine 251.

This sequence belongs to the tumor necrosis factor family. Homotrimer. Interacts with CD28. CD40 ligand, soluble form: Exists as either a monomer or a homotrimer. Forms a ternary complex between CD40 and integrins for CD40-CD40LG signaling. Post-translationally, the soluble form derives from the membrane form by proteolytic processing.

The protein localises to the cell membrane. Its subcellular location is the cell surface. The protein resides in the secreted. In terms of biological role, cytokine that acts as a ligand to CD40/TNFRSF5. Costimulates T-cell proliferation and cytokine production. Induces the activation of NF-kappa-B. Mediates B-cell proliferation in the absence of co-stimulus as well as IgE production in the presence of IL4. Involved in immunoglobulin class switching. Its function is as follows. Acts as a ligand for integrins, specifically ITGA5:ITGB1 and ITGAV:ITGB3; both integrins and the CD40 receptor are required for activation of CD40-CD40LG signaling, which have cell-type dependent effects, such as B-cell activation, NF-kappa-B signaling and anti-apoptotic signaling. This chain is CD40 ligand (CD40LG), found in Gallus gallus (Chicken).